A 299-amino-acid polypeptide reads, in one-letter code: 4-diphosphocytidyl-2-C-methyl-D-erythritol kinase (299 aa).

Lys-22 is an active-site residue. Position 108-118 (108-118 (PVGAGLGGGSS)) interacts with ATP. Asp-150 is an active-site residue.

It belongs to the GHMP kinase family. IspE subfamily.

It carries out the reaction 4-CDP-2-C-methyl-D-erythritol + ATP = 4-CDP-2-C-methyl-D-erythritol 2-phosphate + ADP + H(+). Its pathway is isoprenoid biosynthesis; isopentenyl diphosphate biosynthesis via DXP pathway; isopentenyl diphosphate from 1-deoxy-D-xylulose 5-phosphate: step 3/6. Its function is as follows. Catalyzes the phosphorylation of the position 2 hydroxy group of 4-diphosphocytidyl-2C-methyl-D-erythritol. In Desulfotalea psychrophila (strain LSv54 / DSM 12343), this protein is 4-diphosphocytidyl-2-C-methyl-D-erythritol kinase.